The following is a 950-amino-acid chain: Zinc finger CCCH domain-containing protein 3 (950 aa).

Disordered regions lie at residues 32–106 (GNSS…HPEP), 127–182 (IKPP…TKVG), 201–220 (VVKS…RTVS), and 314–489 (SEKS…VLRK). Basic residues predominate over residues 56-74 (RPSRRGFSSHHGPSWRKKY). The segment covering 76-96 (LVNQPVESSDPASDPAFQTSL) has biased composition (polar residues). The span at 327-338 (PRTTLESGNKAT) shows a compositional bias: polar residues. The segment covering 344 to 360 (KTEKPQPKVDPEVRPEK) has biased composition (basic and acidic residues). A compositionally biased stretch (low complexity) spans 370-388 (SPSKYKWKASSPSASSSSS). The segment covering 402-412 (SQLSPVPSRPT) has biased composition (polar residues). Ser405 is subject to Phosphoserine. Positions 438–449 (VKSRTKIIRRRG) are enriched in basic residues. Residues 460–470 (SPTTATTSKNH) are compositionally biased toward polar residues. 5 C3H1-type zinc fingers span residues 662 to 690 (EKKR…HDPE), 694 to 717 (VCTR…HHVS), 718 to 744 (KEKM…HVYV), 745 to 772 (SRKA…HTLL), and 773 to 795 (CPDF…HRNQ). The tract at residues 793–950 (RNQKRHGRRT…GKPLHIKPRL (158 aa)) is disordered. Residues 828 to 838 (PTTTQRSVRQM) show a composition bias toward polar residues. The segment covering 839-849 (SSGLASGAEAP) has biased composition (low complexity). Phosphoserine is present on residues Ser851 and Ser855. The segment covering 857 to 888 (RVLASTSTLSSKATAASSPSPSPSTSSPAPSL) has biased composition (low complexity). The span at 914–928 (SLHSSPSPGGQTETG) shows a compositional bias: polar residues. A phosphoserine mark is found at Ser918, Ser920, and Ser934.

In terms of assembly, interacts with SMAD1, SMAD3, SMAD4, CPSF2 and CPSF3.

The protein resides in the nucleus. Required for the export of polyadenylated mRNAs from the nucleus. Enhances ACVR1B-induced SMAD-dependent transcription. Binds to single-stranded DNA but not to double-stranded DNA in vitro. Involved in RNA cleavage. The protein is Zinc finger CCCH domain-containing protein 3 (Zc3h3) of Mus musculus (Mouse).